The chain runs to 131 residues: Small ribosomal subunit protein eS8 (131 aa).

The interval 1–38 is disordered; the sequence is MKLGAYYKGGDLKKPSGGKKRKVRRTKKKALGGGPPQI. A compositionally biased stretch (basic residues) spans 16–30; that stretch reads SGGKKRKVRRTKKKA.

Belongs to the eukaryotic ribosomal protein eS8 family. Part of the 30S ribosomal subunit.

This Pyrobaculum arsenaticum (strain DSM 13514 / JCM 11321 / PZ6) protein is Small ribosomal subunit protein eS8.